A 196-amino-acid chain; its full sequence is Protein hunchback (196 aa).

Disordered regions lie at residues 16-60 (SHHH…NTNL) and 90-196 (AMTP…KYMA). A compositionally biased stretch (basic residues) spans 17–30 (HHHHHHHAHHSYHQ). A compositionally biased stretch (polar residues) spans 92-103 (TPSSSNNDQNSP). Residues 125–144 (PTATTTTTPAAAAPTTTAAT) show a composition bias toward low complexity. Over residues 176–196 (AEREKEHDLMSNSSEDMKYMA) the composition is skewed to basic and acidic residues.

The protein belongs to the hunchback C2H2-type zinc-finger protein family.

It localises to the nucleus. Gap class segmentation protein that controls development of head structures. This chain is Protein hunchback (hb), found in Drosophila silvestris (Fruit fly).